A 616-amino-acid chain; its full sequence is Cytochrome c oxidase subunit 1 (616 aa).

A helical membrane pass occupies residues 28-48 (HLYLISGGFFFLLGGLEALFI). A Fe(II)-heme a-binding site is contributed by H72. Helical transmembrane passes span 75 to 95 (TMIF…VVPL), 102 to 122 (VAFP…GLFL), 158 to 178 (GLQI…VTII), 198 to 218 (FVTS…LIFM), 243 to 263 (LFWV…FGIF), and 275 to 295 (LFGY…GFMV). 2 residues coordinate Cu cation: H249 and Y253. Positions 249-253 (HPEVY) form a cross-link, 1'-histidyl-3'-tyrosine (His-Tyr). Residues H298 and H299 each coordinate Cu cation. 7 helical membrane passes run 303–323 (VGMG…IAVP), 349–369 (AVAF…LASA), 380–400 (FVVA…LLAG), 420–440 (ITFW…HFLG), 463–483 (ISTI…INIV), 553–573 (SSFL…GFTY), and 577–597 (AGWG…SMFL). H384 is a Fe(II)-heme o binding site. Position 384 (H384) interacts with heme a3. H386 lines the Fe(II)-heme a pocket.

It belongs to the heme-copper respiratory oxidase family. Cu(2+) is required as a cofactor. Requires heme as cofactor.

The protein resides in the cell membrane. It catalyses the reaction 4 Fe(II)-[cytochrome c] + O2 + 8 H(+)(in) = 4 Fe(III)-[cytochrome c] + 2 H2O + 4 H(+)(out). Its pathway is energy metabolism; oxidative phosphorylation. In terms of biological role, cytochrome c oxidase is the component of the respiratory chain that catalyzes the reduction of oxygen to water. Subunits 1-3 form the functional core of the enzyme complex. Co I is the catalytic subunit of the enzyme. Electrons originating in cytochrome c are transferred via the copper A center of subunit 2 and heme a of subunit 1 to the bimetallic center formed by heme a3 and copper B. This cytochrome c oxidase shows proton pump activity across the membrane in addition to the electron transfer. This chain is Cytochrome c oxidase subunit 1 (ctaD), found in Bacillus sp. (strain PS3).